A 356-amino-acid chain; its full sequence is Glycerophosphodiester phosphodiesterase (356 aa).

The first 20 residues, 1–20 (MRGTYCVTLWGGVFAALVAG), serve as a signal peptide directing secretion. The N-palmitoyl cysteine moiety is linked to residue cysteine 21. Cysteine 21 is lipidated: S-diacylglycerol cysteine. Residues 25–314 (RMIVAYRGAA…CHVHTVRKET (290 aa)) enclose the GP-PDE domain.

It belongs to the glycerophosphoryl diester phosphodiesterase family. In terms of processing, palmitoylated upon expression of a fusion protein with first 40 residues fused to PhoA in E.coli.

The protein localises to the cell inner membrane. It carries out the reaction a sn-glycero-3-phosphodiester + H2O = an alcohol + sn-glycerol 3-phosphate + H(+). Its function is as follows. Glycerophosphoryl diester phosphodiesterase hydrolyzes deacylated phospholipids to G3P and the corresponding alcohols. Functionally, binds human IgA, IgD and the Fc portion of IgG but not IgM, which may contribute to evasion of the human immune system. The polypeptide is Glycerophosphodiester phosphodiesterase (glpQ) (Treponema pallidum (strain Nichols)).